Reading from the N-terminus, the 358-residue chain is Probable butyrate kinase (358 aa).

The protein belongs to the acetokinase family.

It localises to the cytoplasm. It catalyses the reaction butanoate + ATP = butanoyl phosphate + ADP. In Oceanobacillus iheyensis (strain DSM 14371 / CIP 107618 / JCM 11309 / KCTC 3954 / HTE831), this protein is Probable butyrate kinase.